The sequence spans 360 residues: UPF0324 membrane protein plu2856 (360 aa).

9 consecutive transmembrane segments (helical) span residues 20 to 42 (LIPG…NIPW), 47 to 69 (GLGT…YPLL), 104 to 126 (VGIT…AIWL), 136 to 155 (QTVI…AIMA), 167 to 189 (VAVA…PWFY), 239 to 256 (MIRV…SRYI), 277 to 299 (WFAV…AAIV), 304 to 326 (NIDT…VSAI), and 333 to 355 (PILL…NLGI).

The protein belongs to the UPF0324 family.

The protein resides in the cell membrane. The sequence is that of UPF0324 membrane protein plu2856 from Photorhabdus laumondii subsp. laumondii (strain DSM 15139 / CIP 105565 / TT01) (Photorhabdus luminescens subsp. laumondii).